The chain runs to 230 residues: Voltage-gated hydrogen channel 1 (230 aa).

At 1–58 (MAGCLRHFTSVGDDTKKREWKQEDVEVAYEEPLKNTPHPFIASYSFRGALKWLLSSHK) the chain is on the cytoplasmic side. Residues 59–79 (FQIVIICLVILDALFVLVEVL) traverse the membrane as a helical segment. The Extracellular segment spans residues 80 to 96 (LDLELLAEKVDHIIPEI). The helical transmembrane segment at 97 to 119 (FHYLSISVLTFFILEIAGKLYAF) threads the bilayer. The Cytoplasmic portion of the chain corresponds to 120 to 127 (RLEFFHHK). A helical membrane pass occupies residues 128-148 (FEVFDAAIVVISFIIDIVYIS). Residues 149–155 (REDIFNA) are Extracellular-facing. A helical transmembrane segment spans residues 156–176 (VGLLILLRLWRVARIVNGVIV). Topologically, residues 177–230 (SVKTRAEEKMHKLKEQKGSLLEKVAQLEQQCAQQEQEIGRLHKLLQEHNVFPAS) are cytoplasmic. The stretch at 178 to 225 (VKTRAEEKMHKLKEQKGSLLEKVAQLEQQCAQQEQEIGRLHKLLQEHN) forms a coiled coil.

This sequence belongs to the hydrogen channel family. In terms of assembly, homodimer.

The protein localises to the membrane. It is found in the cell membrane. In terms of biological role, mediates the voltage-dependent proton permeability of excitable membranes. Forms a proton-selective channel through which protons may pass in accordance with their electrochemical gradient. This is Voltage-gated hydrogen channel 1 (hvcn1) from Xenopus laevis (African clawed frog).